Consider the following 139-residue polypeptide: NADPH-dependent 7-cyano-7-deazaguanine reductase (139 aa).

Cysteine 34 (thioimide intermediate) is an active-site residue. The active-site Proton donor is the aspartate 41. Substrate contacts are provided by residues 56–58 (VEL) and 75–76 (HE).

It belongs to the GTP cyclohydrolase I family. QueF type 1 subfamily.

The protein resides in the cytoplasm. The enzyme catalyses 7-aminomethyl-7-carbaguanine + 2 NADP(+) = 7-cyano-7-deazaguanine + 2 NADPH + 3 H(+). Its pathway is tRNA modification; tRNA-queuosine biosynthesis. Catalyzes the NADPH-dependent reduction of 7-cyano-7-deazaguanine (preQ0) to 7-aminomethyl-7-deazaguanine (preQ1). This Methylobacillus flagellatus (strain ATCC 51484 / DSM 6875 / VKM B-1610 / KT) protein is NADPH-dependent 7-cyano-7-deazaguanine reductase.